A 1115-amino-acid polypeptide reads, in one-letter code: Tbc2 translation factor, chloroplastic (1115 aa).

2 stretches are compositionally biased toward low complexity: residues threonine 69–serine 87 and arginine 163–alanine 175. Disordered regions lie at residues threonine 69 to leucine 90 and arginine 163 to serine 210. Residues arginine 176 to glycine 186 show a composition bias toward gly residues. Residues serine 187 to serine 210 show a composition bias toward low complexity. 9 tandem repeats follow at residues leucine 483–alanine 521, leucine 607–alanine 645, leucine 685–alanine 723, leucine 724–leucine 763, methionine 764–cysteine 803, leucine 804–arginine 842, methionine 843–arginine 880, proline 990–tryptophan 1029, and tryptophan 1030–alanine 1068. The interval leucine 483–alanine 1068 is 9 X 38 AA approximate repeats.

In terms of assembly, part of a 400 kDa complex which is not stably associated with RNA.

The protein resides in the plastid. It localises to the chloroplast stroma. Functionally, required for expression of the chloroplast encoded psbC mRNA, most likely for translation initiation. Interacts with the 5'-UTR of psbC. This chain is Tbc2 translation factor, chloroplastic (TBC2), found in Chlamydomonas reinhardtii (Chlamydomonas smithii).